The following is a 372-amino-acid chain: 3-dehydroquinate synthase (372 aa).

NAD(+)-binding positions include 116–120, 140–141, Lys153, Lys162, and 180–183; these read GVVGD, TT, and TLKT. Zn(2+) contacts are provided by Glu195, His260, and His277.

Belongs to the sugar phosphate cyclases superfamily. Dehydroquinate synthase family. Requires NAD(+) as cofactor. Co(2+) serves as cofactor. It depends on Zn(2+) as a cofactor.

The protein resides in the cytoplasm. It catalyses the reaction 7-phospho-2-dehydro-3-deoxy-D-arabino-heptonate = 3-dehydroquinate + phosphate. Its pathway is metabolic intermediate biosynthesis; chorismate biosynthesis; chorismate from D-erythrose 4-phosphate and phosphoenolpyruvate: step 2/7. Its function is as follows. Catalyzes the conversion of 3-deoxy-D-arabino-heptulosonate 7-phosphate (DAHP) to dehydroquinate (DHQ). In Prochlorococcus marinus (strain MIT 9313), this protein is 3-dehydroquinate synthase.